Here is a 92-residue protein sequence, read N- to C-terminus: Small ribosomal subunit protein uS19 (92 aa).

The protein belongs to the universal ribosomal protein uS19 family.

In terms of biological role, protein S19 forms a complex with S13 that binds strongly to the 16S ribosomal RNA. The polypeptide is Small ribosomal subunit protein uS19 (Anoxybacillus flavithermus (strain DSM 21510 / WK1)).